A 130-amino-acid chain; its full sequence is Type VII secretion system extracellular protein C (130 aa).

It belongs to the EsxC family. In terms of assembly, forms both homodimers and heterodimers with EsxA. Homodimerization is calcium-dependent.

It localises to the secreted. The protein is Type VII secretion system extracellular protein C of Staphylococcus aureus (strain USA300).